Consider the following 1179-residue polypeptide: ATP-dependent helicase/deoxyribonuclease subunit B (1179 aa).

It belongs to the helicase family. AddB/RexB type 2 subfamily. In terms of assembly, heterodimer of AddA and RexB. Requires Mg(2+) as cofactor.

The heterodimer acts as both an ATP-dependent DNA helicase and an ATP-dependent, dual-direction single-stranded exonuclease. Recognizes the chi site generating a DNA molecule suitable for the initiation of homologous recombination. This subunit has 5' -&gt; 3' nuclease activity but not helicase activity. This is ATP-dependent helicase/deoxyribonuclease subunit B from Lacticaseibacillus paracasei (strain ATCC 334 / BCRC 17002 / CCUG 31169 / CIP 107868 / KCTC 3260 / NRRL B-441) (Lactobacillus paracasei).